A 239-amino-acid polypeptide reads, in one-letter code: tRNA (guanine-N(7)-)-methyltransferase (239 aa).

Residues Glu69, Glu94, Asp121, and Asp144 each coordinate S-adenosyl-L-methionine. Asp144 is an active-site residue. Substrate contacts are provided by residues Lys148, Asp180, and 217 to 220 (TKFE).

Belongs to the class I-like SAM-binding methyltransferase superfamily. TrmB family. Monomer.

It catalyses the reaction guanosine(46) in tRNA + S-adenosyl-L-methionine = N(7)-methylguanosine(46) in tRNA + S-adenosyl-L-homocysteine. It functions in the pathway tRNA modification; N(7)-methylguanine-tRNA biosynthesis. Catalyzes the formation of N(7)-methylguanine at position 46 (m7G46) in tRNA. This chain is tRNA (guanine-N(7)-)-methyltransferase, found in Buchnera aphidicola subsp. Acyrthosiphon pisum (strain 5A).